Reading from the N-terminus, the 204-residue chain is Somatotropin (204 aa).

Positions 1–17 (MDRVVLMLSVLSLGVSS) are cleaved as a signal peptide. Q18 bears the Pyrrolidone carboxylic acid mark. A Zn(2+)-binding site is contributed by H36. C69 and C177 form a disulfide bridge. Residue E186 participates in Zn(2+) binding. Cysteines 194 and 202 form a disulfide.

This sequence belongs to the somatotropin/prolactin family.

It localises to the secreted. Functionally, growth hormone plays an important role in growth control and is involved in the regulation of several anabolic processes. Implicated as an osmoregulatory substance important for seawater adaptation. The polypeptide is Somatotropin (gh) (Acanthopagrus latus (Yellowfin seabream)).